The sequence spans 59 residues: Protein translocase subunit SecE (59 aa).

Residues 37 to 57 (GIGIIIIGVIGFIISIIAQLL) form a helical membrane-spanning segment.

Belongs to the SecE/SEC61-gamma family. As to quaternary structure, component of the Sec protein translocase complex. Heterotrimer consisting of SecY (alpha), SecG (beta) and SecE (gamma) subunits. The heterotrimers can form oligomers, although 1 heterotrimer is thought to be able to translocate proteins. Interacts with the ribosome. May interact with SecDF, and other proteins may be involved.

It is found in the cell membrane. Essential subunit of the Sec protein translocation channel SecYEG. Clamps together the 2 halves of SecY. May contact the channel plug during translocation. This is Protein translocase subunit SecE from Methanothermobacter thermautotrophicus (strain ATCC 29096 / DSM 1053 / JCM 10044 / NBRC 100330 / Delta H) (Methanobacterium thermoautotrophicum).